Consider the following 190-residue polypeptide: Glutathione peroxidase 2 (190 aa).

Sec-40 is a catalytic residue. Residue Sec-40 is a non-standard amino acid, selenocysteine.

It belongs to the glutathione peroxidase family. As to quaternary structure, homotetramer.

Its subcellular location is the cytoplasm. The protein resides in the cytosol. It carries out the reaction 2 glutathione + H2O2 = glutathione disulfide + 2 H2O. The catalysed reaction is a hydroperoxy polyunsaturated fatty acid + 2 glutathione = a hydroxy polyunsaturated fatty acid + glutathione disulfide + H2O. The enzyme catalyses tert-butyl hydroperoxide + 2 glutathione = tert-butanol + glutathione disulfide + H2O. It catalyses the reaction cumene hydroperoxide + 2 glutathione = 2-phenylpropan-2-ol + glutathione disulfide + H2O. It carries out the reaction (13S)-hydroperoxy-(9Z,11E)-octadecadienoate + 2 glutathione = (13S)-hydroxy-(9Z,11E)-octadecadienoate + glutathione disulfide + H2O. The catalysed reaction is (5S)-hydroperoxy-(6E,8Z,11Z,14Z)-eicosatetraenoate + 2 glutathione = (5S)-hydroxy-(6E,8Z,11Z,14Z)-eicosatetraenoate + glutathione disulfide + H2O. The enzyme catalyses (12R)-hydroperoxy-(5Z,8Z,10E,14Z)-eicosatetraenoate + 2 glutathione = (12R)-hydroxy-(5Z,8Z,10E,14Z)-eicosatetraenoate + glutathione disulfide + H2O. It catalyses the reaction (15S)-hydroperoxy-(5Z,8Z,11Z,13E)-eicosatetraenoate + 2 glutathione = (15S)-hydroxy-(5Z,8Z,11Z,13E)-eicosatetraenoate + glutathione disulfide + H2O. Functionally, catalyzes the reduction of hydroperoxides in a glutathione-dependent manner thus regulating cellular redox homeostasis. Can reduce small soluble hydroperoxides such as H2O2, cumene hydroperoxide and tert-butyl hydroperoxide, as well as several fatty acid-derived hydroperoxides. Cannot reduce phosphatidycholine hydroperoxide. The protein is Glutathione peroxidase 2 (GPX2) of Pongo pygmaeus (Bornean orangutan).